Reading from the N-terminus, the 479-residue chain is Proline--tRNA ligase (479 aa).

It belongs to the class-II aminoacyl-tRNA synthetase family. ProS type 3 subfamily. In terms of assembly, homodimer.

The protein resides in the cytoplasm. The enzyme catalyses tRNA(Pro) + L-proline + ATP = L-prolyl-tRNA(Pro) + AMP + diphosphate. Functionally, catalyzes the attachment of proline to tRNA(Pro) in a two-step reaction: proline is first activated by ATP to form Pro-AMP and then transferred to the acceptor end of tRNA(Pro). The protein is Proline--tRNA ligase of Mesomycoplasma hyopneumoniae (strain J / ATCC 25934 / NCTC 10110) (Mycoplasma hyopneumoniae).